Consider the following 344-residue polypeptide: Phosphoribosylformylglycinamidine cyclo-ligase (344 aa).

Belongs to the AIR synthase family.

The protein localises to the cytoplasm. The enzyme catalyses 2-formamido-N(1)-(5-O-phospho-beta-D-ribosyl)acetamidine + ATP = 5-amino-1-(5-phospho-beta-D-ribosyl)imidazole + ADP + phosphate + H(+). Its pathway is purine metabolism; IMP biosynthesis via de novo pathway; 5-amino-1-(5-phospho-D-ribosyl)imidazole from N(2)-formyl-N(1)-(5-phospho-D-ribosyl)glycinamide: step 2/2. The sequence is that of Phosphoribosylformylglycinamidine cyclo-ligase from Leptospira interrogans serogroup Icterohaemorrhagiae serovar Lai (strain 56601).